The chain runs to 268 residues: Phosphatidylglycerol--prolipoprotein diacylglyceryl transferase (268 aa).

The next 3 helical transmembrane spans lie at 16 to 36 (FITL…GIWL), 56 to 76 (IWLV…FNWG), and 92 to 112 (GIAI…FTYV). An a 1,2-diacyl-sn-glycero-3-phospho-(1'-sn-glycerol)-binding site is contributed by Arg-136. The next 3 membrane-spanning stretches (helical) occupy residues 175 to 195 (PTFL…LWLF), 204 to 224 (GTLL…IEGL), and 236 to 256 (IAQV…FRLY).

Belongs to the Lgt family.

It localises to the cell inner membrane. It catalyses the reaction L-cysteinyl-[prolipoprotein] + a 1,2-diacyl-sn-glycero-3-phospho-(1'-sn-glycerol) = an S-1,2-diacyl-sn-glyceryl-L-cysteinyl-[prolipoprotein] + sn-glycerol 1-phosphate + H(+). Its pathway is protein modification; lipoprotein biosynthesis (diacylglyceryl transfer). Functionally, catalyzes the transfer of the diacylglyceryl group from phosphatidylglycerol to the sulfhydryl group of the N-terminal cysteine of a prolipoprotein, the first step in the formation of mature lipoproteins. The polypeptide is Phosphatidylglycerol--prolipoprotein diacylglyceryl transferase (Thermosynechococcus vestitus (strain NIES-2133 / IAM M-273 / BP-1)).